We begin with the raw amino-acid sequence, 71 residues long: Small ribosomal subunit protein bS18 (71 aa).

The protein belongs to the bacterial ribosomal protein bS18 family. Part of the 30S ribosomal subunit. Forms a tight heterodimer with protein bS6.

Binds as a heterodimer with protein bS6 to the central domain of the 16S rRNA, where it helps stabilize the platform of the 30S subunit. This chain is Small ribosomal subunit protein bS18, found in Dichelobacter nodosus (strain VCS1703A).